The following is a 490-amino-acid chain: Transcriptional regulator FleQ (490 aa).

Leu142 contacts 3',3'-c-di-GMP. ADP contacts are provided by residues Val147 and 177-182; that span reads GTGKEV. 3',3'-c-di-GMP-binding positions include 186 to 189 and 330 to 341; these read NLHY and ELISRMEHEKRG. ADP contacts are provided by Arg334 and Arg363.

As to quaternary structure, forms homodimers. Forms homohexamers that inhibit transcription initiation. Interacts with FleN; this complex is formed in the presence as well as in the absence of c-di-GMP or ATP.

Its activity is regulated as follows. C-di-GMP interaction leads to active site obstruction, hexameric ring destabilization thus relieving DNA bending and activating gene transcription. AAA+ ATPase enhancer-binding protein that acts as a transcription regulator and plays a role in the modulation of mucin adhesion and flagellar gene expression. In addition to flagella genes, also regulates expression of biofilm-related genes. Functions as a transcriptional repressor in the absence of c-di-GMP and as an activator when c-di-GMP is present. The protein is Transcriptional regulator FleQ of Pseudomonas aeruginosa (strain ATCC 15692 / DSM 22644 / CIP 104116 / JCM 14847 / LMG 12228 / 1C / PRS 101 / PAO1).